An 86-amino-acid chain; its full sequence is Omega-theraphotoxin-Hhn1f 2 (86 aa).

The N-terminal stretch at 1–21 (MKSIVFVALFGLALLAVVCSA) is a signal peptide. The propeptide occupies 22–50 (SEDAHKELLKEVVRAVVVDKTDAVQAEER). 3 disulfides stabilise this stretch: cysteine 52/cysteine 66, cysteine 59/cysteine 71, and cysteine 65/cysteine 78.

The protein belongs to the neurotoxin 10 (Hwtx-1) family. 17 (Hntx-9) subfamily. In terms of tissue distribution, expressed by the venom gland.

The protein resides in the secreted. Its function is as follows. Ion channel inhibitor. The sequence is that of Omega-theraphotoxin-Hhn1f 2 from Cyriopagopus hainanus (Chinese bird spider).